The following is a 126-amino-acid chain: Large ribosomal subunit protein bL12 (126 aa).

Residues 104 to 116 show a composition bias toward basic and acidic residues; sequence AKKEDAEKAKAQL. Positions 104-126 are disordered; the sequence is AKKEDAEKAKAQLEEAGATVELK. Over residues 117–126 the composition is skewed to low complexity; the sequence is EEAGATVELK.

It belongs to the bacterial ribosomal protein bL12 family. In terms of assembly, homodimer. Part of the ribosomal stalk of the 50S ribosomal subunit. Forms a multimeric L10(L12)X complex, where L10 forms an elongated spine to which 2 to 4 L12 dimers bind in a sequential fashion. Binds GTP-bound translation factors.

Its function is as follows. Forms part of the ribosomal stalk which helps the ribosome interact with GTP-bound translation factors. Is thus essential for accurate translation. This Bifidobacterium animalis subsp. lactis (strain AD011) protein is Large ribosomal subunit protein bL12.